A 91-amino-acid chain; its full sequence is MSIRIEIGERYVVTSDSFQFILHEKKRAESGKNAGQEWLAVVGYYPKLSQLVSGLMHHDILTGSAKSFADLNVQVEQLSKRCSEAFGSYGR.

The protein to phage 186 CP83.

This is an uncharacterized protein from Escherichia phage P2 (Bacteriophage P2).